Reading from the N-terminus, the 772-residue chain is Ion-translocating oxidoreductase complex subunit C (772 aa).

2 consecutive 4Fe-4S ferredoxin-type domains span residues 369–397 (GEPQ…QQLY) and 407–436 (KATT…VQYF). The [4Fe-4S] cluster site is built by Cys377, Cys380, Cys383, Cys387, Cys416, Cys419, Cys422, and Cys426. The segment at 599–748 (KARKLEQQQA…EPEEQVDPRK (150 aa)) is disordered.

This sequence belongs to the 4Fe4S bacterial-type ferredoxin family. RnfC subfamily. As to quaternary structure, the complex is composed of six subunits: RsxA, RsxB, RsxC, RsxD, RsxE and RsxG. It depends on [4Fe-4S] cluster as a cofactor.

It is found in the cell inner membrane. Part of a membrane-bound complex that couples electron transfer with translocation of ions across the membrane. Required to maintain the reduced state of SoxR. This Shigella dysenteriae serotype 1 (strain Sd197) protein is Ion-translocating oxidoreductase complex subunit C.